The sequence spans 417 residues: Tyrosine--tRNA ligase (417 aa).

Tyr-36 is an L-tyrosine binding site. A 'HIGH' region motif is present at residues 41-50 (PTADSLHIGH). Residues Tyr-170 and Gln-174 each coordinate L-tyrosine. Residues 231-235 (KFGKS) carry the 'KMSKS' region motif. Residue Lys-234 participates in ATP binding. The S4 RNA-binding domain maps to 351-417 (TNLVELLIEA…GKKKYFMIIH (67 aa)).

This sequence belongs to the class-I aminoacyl-tRNA synthetase family. TyrS type 1 subfamily. In terms of assembly, homodimer.

The protein localises to the cytoplasm. The enzyme catalyses tRNA(Tyr) + L-tyrosine + ATP = L-tyrosyl-tRNA(Tyr) + AMP + diphosphate + H(+). Functionally, catalyzes the attachment of tyrosine to tRNA(Tyr) in a two-step reaction: tyrosine is first activated by ATP to form Tyr-AMP and then transferred to the acceptor end of tRNA(Tyr). This is Tyrosine--tRNA ligase from Macrococcus caseolyticus (strain JCSC5402) (Macrococcoides caseolyticum).